Consider the following 568-residue polypeptide: Hemagglutinin-neuraminidase (568 aa).

The Intravirion segment spans residues 1–18 (MSGAEGNTNKRTFRAVFR). A helical membrane pass occupies residues 19-39 (TLIILITLTILALSAAILYEV). At 40-568 (THTSNGSESN…VPFLREVIIT (529 aa)) the chain is on the virion surface side. 2 N-linked (GlcNAc...) asparagine; by host glycosylation sites follow: N44 and N111. Cystine bridges form between C162/C186, C176/C237, and C228/C241. The interval 224-229 (NRKSCS) is involved in neuraminidase activity. N-linked (GlcNAc...) asparagine; by host glycosylation is found at N268 and N280. 3 disulfides stabilise this stretch: C334–C455, C366–C376, and C449–C459. An N-linked (GlcNAc...) asparagine; by host glycan is attached at N382. N513 carries an N-linked (GlcNAc...) asparagine; by host glycan. C531 and C542 form a disulfide bridge.

This sequence belongs to the paramyxoviruses hemagglutinin-neuraminidase family. As to quaternary structure, homotetramer; composed of disulfide-linked homodimers.

Its subcellular location is the virion membrane. It localises to the host cell membrane. The enzyme catalyses Hydrolysis of alpha-(2-&gt;3)-, alpha-(2-&gt;6)-, alpha-(2-&gt;8)- glycosidic linkages of terminal sialic acid residues in oligosaccharides, glycoproteins, glycolipids, colominic acid and synthetic substrates.. Attaches the virus to sialic acid-containing cell receptors and thereby initiating infection. Binding of HN protein to the receptor induces a conformational change that allows the F protein to trigger virion/cell membranes fusion. Functionally, neuraminidase activity ensures the efficient spread of the virus by dissociating the mature virions from the neuraminic acid containing glycoproteins. The protein is Hemagglutinin-neuraminidase (HN) of Simiiformes (SV41).